The chain runs to 701 residues: Kinesin-like protein KIN-10C (701 aa).

A Kinesin motor domain is found at 8 to 318 (VVRVVARVKP…LNLASRICLG (311 aa)). 94–101 (GARNSGKT) provides a ligand contact to ATP.

This sequence belongs to the TRAFAC class myosin-kinesin ATPase superfamily. Kinesin family. KIN-10 subfamily.

This is Kinesin-like protein KIN-10C from Arabidopsis thaliana (Mouse-ear cress).